The sequence spans 267 residues: Membrane-spanning 4-domains subfamily A member 12 (267 aa).

Residues 1–91 (MMSSKPTSHA…MNFKEEAKAL (91 aa)) lie on the Cytoplasmic side of the membrane. Residues 92–112 (GVIQIMVGLMHIGFGIVLCLI) form a helical membrane-spanning segment. Residues 113–120 (SFSFREVL) lie on the Extracellular side of the membrane. Residues 121–141 (GFASTAVIGGYPFWGGLSFII) traverse the membrane as a helical segment. Residues 142–160 (SGSLSVSASKELSRCLVKG) are Cytoplasmic-facing. Residues 161–181 (SLGMNIVSSILAFIGVILLLV) traverse the membrane as a helical segment. Residues 182-200 (DMCINGVAGQDYWAVLSGK) are Extracellular-facing. The chain crosses the membrane as a helical span at residues 201 to 221 (GISATLMIFSLLEFFVACATA). Residues 222–267 (HFANQANTTTNMSVLVIPNMYESNPVTPASSSAPPRCNNYSANAPK) are Cytoplasmic-facing. Residues 248-267 (TPASSSAPPRCNNYSANAPK) form a disordered region.

The protein belongs to the MS4A family.

Its subcellular location is the membrane. In terms of biological role, may be involved in signal transduction as a component of a multimeric receptor complex. The polypeptide is Membrane-spanning 4-domains subfamily A member 12 (MS4A12) (Homo sapiens (Human)).